The following is a 548-amino-acid chain: Dihydroxy-acid dehydratase (548 aa).

Aspartate 78 serves as a coordination point for Mg(2+). A [2Fe-2S] cluster-binding site is contributed by cysteine 119. The Mg(2+) site is built by aspartate 120 and lysine 121. Lysine 121 is modified (N6-carboxylysine). Cysteine 185 contributes to the [2Fe-2S] cluster binding site. Position 438 (glutamate 438) interacts with Mg(2+). The Proton acceptor role is filled by serine 464.

Belongs to the IlvD/Edd family. In terms of assembly, homodimer. The cofactor is [2Fe-2S] cluster. Requires Mg(2+) as cofactor.

It carries out the reaction (2R)-2,3-dihydroxy-3-methylbutanoate = 3-methyl-2-oxobutanoate + H2O. It catalyses the reaction (2R,3R)-2,3-dihydroxy-3-methylpentanoate = (S)-3-methyl-2-oxopentanoate + H2O. The protein operates within amino-acid biosynthesis; L-isoleucine biosynthesis; L-isoleucine from 2-oxobutanoate: step 3/4. Its pathway is amino-acid biosynthesis; L-valine biosynthesis; L-valine from pyruvate: step 3/4. Its function is as follows. Functions in the biosynthesis of branched-chain amino acids. Catalyzes the dehydration of (2R,3R)-2,3-dihydroxy-3-methylpentanoate (2,3-dihydroxy-3-methylvalerate) into 2-oxo-3-methylpentanoate (2-oxo-3-methylvalerate) and of (2R)-2,3-dihydroxy-3-methylbutanoate (2,3-dihydroxyisovalerate) into 2-oxo-3-methylbutanoate (2-oxoisovalerate), the penultimate precursor to L-isoleucine and L-valine, respectively. The polypeptide is Dihydroxy-acid dehydratase (Methanothrix thermoacetophila (strain DSM 6194 / JCM 14653 / NBRC 101360 / PT) (Methanosaeta thermophila)).